The primary structure comprises 499 residues: Alpha-amylase 3 (499 aa).

Ca(2+) is bound by residues N127 and D183. D213 acts as the Nucleophile in catalysis. Position 217 (H217) interacts with Ca(2+). The active-site Proton donor is E248.

This sequence belongs to the glycosyl hydrolase 13 family. In terms of assembly, monomer. The cofactor is Ca(2+).

The protein resides in the cytoplasm. The catalysed reaction is Endohydrolysis of (1-&gt;4)-alpha-D-glucosidic linkages in polysaccharides containing three or more (1-&gt;4)-alpha-linked D-glucose units.. In Dictyoglomus thermophilum (strain ATCC 35947 / DSM 3960 / H-6-12), this protein is Alpha-amylase 3 (amyC).